The primary structure comprises 588 residues: Aspartate--tRNA ligase (588 aa).

Residue Glu-174 participates in L-aspartate binding. Residues Gln-198–Lys-201 are aspartate. Arg-220 serves as a coordination point for L-aspartate. ATP-binding positions include Arg-220 to Glu-222 and Gln-229. Position 448 (His-448) interacts with L-aspartate. Glu-482 contributes to the ATP binding site. Arg-489 contacts L-aspartate. Gly-534–Arg-537 provides a ligand contact to ATP.

Belongs to the class-II aminoacyl-tRNA synthetase family. Type 1 subfamily. As to quaternary structure, homodimer.

Its subcellular location is the cytoplasm. The catalysed reaction is tRNA(Asp) + L-aspartate + ATP = L-aspartyl-tRNA(Asp) + AMP + diphosphate. Catalyzes the attachment of L-aspartate to tRNA(Asp) in a two-step reaction: L-aspartate is first activated by ATP to form Asp-AMP and then transferred to the acceptor end of tRNA(Asp). This is Aspartate--tRNA ligase from Exiguobacterium sibiricum (strain DSM 17290 / CCUG 55495 / CIP 109462 / JCM 13490 / 255-15).